Here is a 569-residue protein sequence, read N- to C-terminus: Santalene synthase (569 aa).

(2E)-geranyl diphosphate-binding residues include Arg-284, Asp-321, Asp-325, and Arg-460. The Mg(2+) site is built by Asp-321 and Asp-325. A DDXXD motif motif is present at residues 321–325; it reads DDAYD. Mg(2+) is bound by residues Asn-463, Thr-467, and Glu-471.

Belongs to the terpene synthase family. Tpsb subfamily. It depends on Mg(2+) as a cofactor. The cofactor is Mn(2+).

The enzyme catalyses (2E,6E)-farnesyl diphosphate = (1S,5S,6R)-alpha-bergamotene + diphosphate. The catalysed reaction is (2E,6E)-farnesyl diphosphate = (+)-alpha-santalene + diphosphate. It catalyses the reaction (2E,6E)-farnesyl diphosphate = (-)-beta-santalene + diphosphate. Catalyzes a mixture of sesquiterpenoids from (2E,6E)-farnesyl diphosphate in fragrance biosynthesis. Catalyzes the formation of alpha-santalene, beta-santalene, epi-beta-santalene and exo-alpha-bergamotene, as well as traces of alpha-farnesene and beta-farnesene. This chain is Santalene synthase, found in Santalum austrocaledonicum (Sandalwood).